Reading from the N-terminus, the 110-residue chain is Insulin growth factor-like family member 1 (110 aa).

A signal peptide spans 1–24 (MAPRGCIVAVFAIFCISRLLCSHG). Residue Asn-71 is glycosylated (N-linked (GlcNAc...) asparagine).

Belongs to the IGFL family. As to quaternary structure, homodimer; disulfide-linked. As to expression, detected in ovary and spinal cord.

The protein resides in the secreted. In terms of biological role, probable ligand of the IGFLR1 cell membrane receptor. In Homo sapiens (Human), this protein is Insulin growth factor-like family member 1 (IGFL1).